The following is a 136-amino-acid chain: Mite allergen Der f 21.0101 (136 aa).

Residues 1-17 form the signal peptide; it reads MKFIIFCAIVMAVSVSG.

The protein belongs to the mite group 5 allergen family. As to quaternary structure, monomer. Homodimer. In terms of tissue distribution, highly expressed in foregut (stomach), midgut and hindgut. Not expressed in body wall, reproductive system or body cavity.

The chain is Mite allergen Der f 21.0101 from Dermatophagoides farinae (American house dust mite).